The sequence spans 284 residues: 4-diphosphocytidyl-2-C-methyl-D-erythritol kinase (284 aa).

The active site involves lysine 9. Proline 90–serine 100 serves as a coordination point for ATP. Aspartate 132 is a catalytic residue.

Belongs to the GHMP kinase family. IspE subfamily.

It carries out the reaction 4-CDP-2-C-methyl-D-erythritol + ATP = 4-CDP-2-C-methyl-D-erythritol 2-phosphate + ADP + H(+). Its pathway is isoprenoid biosynthesis; isopentenyl diphosphate biosynthesis via DXP pathway; isopentenyl diphosphate from 1-deoxy-D-xylulose 5-phosphate: step 3/6. Catalyzes the phosphorylation of the position 2 hydroxy group of 4-diphosphocytidyl-2C-methyl-D-erythritol. This is 4-diphosphocytidyl-2-C-methyl-D-erythritol kinase from Dehalococcoides mccartyi (strain ATCC BAA-2266 / KCTC 15142 / 195) (Dehalococcoides ethenogenes (strain 195)).